The sequence spans 63 residues: Large ribosomal subunit protein uL29 (63 aa).

The protein belongs to the universal ribosomal protein uL29 family.

This Haemophilus influenzae (strain 86-028NP) protein is Large ribosomal subunit protein uL29.